Reading from the N-terminus, the 638-residue chain is MNQLLSKSFKPLVVAGVAVIGISAFSGNRAYDEYRKERESISKKMINDLNENKITMFDYFQECKTLGRDEQLSKLNKLSKVYNKQKLNEQENQEELIDLDLIVIGGGATGTGVALDAQSRGMKVALFEKYDFSSGTSSKSTKLVHGGIRYLESAIMKLKPSELTLVKEALRERSNLLNNAPHLSRQLPIVIPAYSIFDASKFWIGCKLYDFFYPFNDIPKSYLQTSAQTYKEFPFLREGLVSSVVYYDGQHNDSRMNVSLALTAAQQGALTLNYTEVVELIKDDKINNNNKQQQLKGVVIRDRLTGKKYSVPAKCVVNATGPYCDSIRNLDDPRADPIITASSGVHIMLPGNLIPSDKGFLNPKTKDGRVLFILPFEGKTLVGTTDDPSPIIENPQPLEKDVEFILDSIKEYSNPNVKLDKSQVLACWSGIRPLVSDEPAAQGDNKKSTSQVTRSHSLRMSESGLITIVGGKWTTYRSMAEATVNLVCSKHDIFTPKGCITKNLPLIGGEKYYNTLNQYLIKNFNLPEDIAEHLAHSYGDQAPFVAKLANENGSNKRLVEGYPYIEAEVTYGVKKEYACTAEDIIGRRTRLSFLDHDKAEIALPKIINIMAPLLKWSNERKKEELKNSQNYLKTMTSK.

Position 100-128 (100-128) interacts with FAD; sequence DLIVIGGGATGTGVALDAQSRGMKVALFE.

It belongs to the FAD-dependent glycerol-3-phosphate dehydrogenase family. The cofactor is FAD.

The protein localises to the mitochondrion. It catalyses the reaction a quinone + sn-glycerol 3-phosphate = dihydroxyacetone phosphate + a quinol. It participates in polyol metabolism; glycerol degradation via glycerol kinase pathway; glycerone phosphate from sn-glycerol 3-phosphate (anaerobic route): step 1/1. The sequence is that of Probable glycerol-3-phosphate dehydrogenase, mitochondrial from Dictyostelium discoideum (Social amoeba).